The following is a 272-amino-acid chain: uncharacterized protein (272 aa).

Glu-163 is an active-site residue.

The protein belongs to the glycosyl hydrolase 25 family.

This is an uncharacterized protein from Escherichia coli O157:H7.